The sequence spans 87 residues: DNA-directed RNA polymerase subunit omega (87 aa).

Belongs to the RNA polymerase subunit omega family. As to quaternary structure, the RNAP catalytic core consists of 2 alpha, 1 beta, 1 beta' and 1 omega subunit. When a sigma factor is associated with the core the holoenzyme is formed, which can initiate transcription.

It carries out the reaction RNA(n) + a ribonucleoside 5'-triphosphate = RNA(n+1) + diphosphate. Promotes RNA polymerase assembly. Latches the N- and C-terminal regions of the beta' subunit thereby facilitating its interaction with the beta and alpha subunits. This chain is DNA-directed RNA polymerase subunit omega, found in Alcanivorax borkumensis (strain ATCC 700651 / DSM 11573 / NCIMB 13689 / SK2).